Reading from the N-terminus, the 144-residue chain is MNSEKVFVDGNVIVDIFDERRVNHKYSVQAIRILLANKFDLLTSSDLITTVYYVLSKIDKKKALSDIKEVVNILEIIPFGKAEVEKAIELMEGDKNFKDLEDTLQYVLAKKEGCKLILSNDKSFYSPDIEVLTTEEFCERWNTL.

The region spanning 6–132 (VFVDGNVIVD…SFYSPDIEVL (127 aa)) is the PINc domain. 2 residues coordinate Mg(2+): Asp-9 and Asp-102.

It belongs to the PINc/VapC protein family. Requires Mg(2+) as cofactor.

Its function is as follows. Toxic component of a type II toxin-antitoxin (TA) system. An RNase. This Aquifex aeolicus (strain VF5) protein is Ribonuclease VapC1.